A 309-amino-acid chain; its full sequence is Carboxylesterase Culp6 homolog (309 aa).

The helical transmembrane segment at 5–25 threads the bilayer; the sequence is ITVIAVLIVLALIGVGIVQYV. Cysteines 55 and 146 form a disulfide. Residues S157, D253, and H279 contribute to the active site. C249 and C256 are disulfide-bonded.

Belongs to the cutinase family.

The protein localises to the cell membrane. The catalysed reaction is a butanoate ester + H2O = an aliphatic alcohol + butanoate + H(+). Its activity is regulated as follows. Inhibited by tetrahydrolipstatin (THL), a specific lipase inhibitor. In terms of biological role, esterase that may be involved in cell wall biosynthesis and/or maintenance. Hydrolyzes pNP-butyrate (C4). The sequence is that of Carboxylesterase Culp6 homolog from Corynebacterium glutamicum (strain ATCC 13032 / DSM 20300 / JCM 1318 / BCRC 11384 / CCUG 27702 / LMG 3730 / NBRC 12168 / NCIMB 10025 / NRRL B-2784 / 534).